The chain runs to 131 residues: Large ribosomal subunit protein eL32 (131 aa).

Belongs to the eukaryotic ribosomal protein eL32 family. Component of the large ribosomal subunit (LSU). Mature N.crassa ribosomes consist of a small (40S) and a large (60S) subunit. The 40S small subunit contains 1 molecule of ribosomal RNA (18S rRNA) and at least 32 different proteins. The large 60S subunit contains 3 rRNA molecules (26S, 5.8S and 5S rRNA) and at least 42 different proteins.

The protein localises to the cytoplasm. Functionally, component of the ribosome, a large ribonucleoprotein complex responsible for the synthesis of proteins in the cell. The small ribosomal subunit (SSU) binds messenger RNAs (mRNAs) and translates the encoded message by selecting cognate aminoacyl-transfer RNA (tRNA) molecules. The large subunit (LSU) contains the ribosomal catalytic site termed the peptidyl transferase center (PTC), which catalyzes the formation of peptide bonds, thereby polymerizing the amino acids delivered by tRNAs into a polypeptide chain. The nascent polypeptides leave the ribosome through a tunnel in the LSU and interact with protein factors that function in enzymatic processing, targeting, and the membrane insertion of nascent chains at the exit of the ribosomal tunnel. The chain is Large ribosomal subunit protein eL32 (crp-63) from Neurospora crassa (strain ATCC 24698 / 74-OR23-1A / CBS 708.71 / DSM 1257 / FGSC 987).